The chain runs to 386 residues: Cytochrome b (386 aa).

Transmembrane regions (helical) follow at residues 32–52 (LGSL…FLAM), 76–98 (WFIR…IHIG), 113–133 (VWNV…LGYC), and 179–199 (FFAF…MHFM). Positions 82 and 96 each coordinate heme b. Heme b is bound by residues H183 and H197. H202 contacts a ubiquinone. Helical transmembrane passes span 225–245 (FIFK…LFVF), 289–309 (LLGV…PITD), 321–341 (FSKF…HLGE), and 348–368 (FVVM…VIVP).

This sequence belongs to the cytochrome b family. In terms of assembly, fungal cytochrome b-c1 complex contains 10 subunits; 3 respiratory subunits, 2 core proteins and 5 low-molecular weight proteins. Cytochrome b-c1 complex is a homodimer. Heme b is required as a cofactor.

Its subcellular location is the mitochondrion inner membrane. In terms of biological role, component of the ubiquinol-cytochrome c reductase complex (complex III or cytochrome b-c1 complex) that is part of the mitochondrial respiratory chain. The b-c1 complex mediates electron transfer from ubiquinol to cytochrome c. Contributes to the generation of a proton gradient across the mitochondrial membrane that is then used for ATP synthesis. This is Cytochrome b (COB) from Kluyveromyces lactis (strain ATCC 8585 / CBS 2359 / DSM 70799 / NBRC 1267 / NRRL Y-1140 / WM37) (Yeast).